A 269-amino-acid polypeptide reads, in one-letter code: 3'(2'),5'-bisphosphate nucleotidase CysQ (269 aa).

Residues Glu-69, Asp-89, Leu-91, Asp-92, and Asp-216 each coordinate Mg(2+). Glu-69 lines the substrate pocket. Residues 91–94 (LDGT) and Asp-216 each bind substrate.

Belongs to the inositol monophosphatase superfamily. CysQ family. Mg(2+) serves as cofactor.

It is found in the cell inner membrane. The catalysed reaction is adenosine 3',5'-bisphosphate + H2O = AMP + phosphate. Converts adenosine-3',5'-bisphosphate (PAP) to AMP. In Aggregatibacter actinomycetemcomitans (Actinobacillus actinomycetemcomitans), this protein is 3'(2'),5'-bisphosphate nucleotidase CysQ.